Reading from the N-terminus, the 81-residue chain is Cytochrome b559 subunit alpha (81 aa).

The chain crosses the membrane as a helical span at residues 21-35; it reads VIHALTIPALFLAGW. Residue histidine 23 coordinates heme.

Belongs to the PsbE/PsbF family. As to quaternary structure, heterodimer of an alpha subunit and a beta subunit. PSII is composed of 1 copy each of membrane proteins PsbA, PsbB, PsbC, PsbD, PsbE, PsbF, PsbH, PsbI, PsbJ, PsbK, PsbL, PsbM, PsbT, PsbX, PsbY, PsbZ, Psb30/Ycf12, peripheral proteins PsbO, CyanoQ (PsbQ), PsbU, PsbV and a large number of cofactors. It forms dimeric complexes. It depends on heme b as a cofactor.

Its subcellular location is the cellular thylakoid membrane. In terms of biological role, this b-type cytochrome is tightly associated with the reaction center of photosystem II (PSII). PSII is a light-driven water:plastoquinone oxidoreductase that uses light energy to abstract electrons from H(2)O, generating O(2) and a proton gradient subsequently used for ATP formation. It consists of a core antenna complex that captures photons, and an electron transfer chain that converts photonic excitation into a charge separation. The protein is Cytochrome b559 subunit alpha of Synechococcus sp. (strain JA-3-3Ab) (Cyanobacteria bacterium Yellowstone A-Prime).